A 203-amino-acid polypeptide reads, in one-letter code: Tic20 family protein Ycf60 (203 aa).

The next 5 membrane-spanning stretches (helical) occupy residues 2–22, 51–71, 84–104, 131–151, and 153–173; these read IRLFTFGIITMLVLVIARLAI, IIPYYLPLFEGLQNFGQYVLP, ILLPMLIFYMNHAILGLVTFF, ILLFLVGSLFGAIFRAFPIEF, and ISFIGLTVCNMMFWFILSTIT.

It belongs to the Tic20 family.

The protein resides in the plastid. It is found in the chloroplast membrane. In Porphyra purpurea (Red seaweed), this protein is Tic20 family protein Ycf60 (ycf60).